The primary structure comprises 176 residues: ATP-dependent protease subunit HslV (176 aa).

Residue T5 is part of the active site. Residues S161, C164, and T167 each contribute to the Na(+) site.

It belongs to the peptidase T1B family. HslV subfamily. A double ring-shaped homohexamer of HslV is capped on each side by a ring-shaped HslU homohexamer. The assembly of the HslU/HslV complex is dependent on binding of ATP.

The protein localises to the cytoplasm. The catalysed reaction is ATP-dependent cleavage of peptide bonds with broad specificity.. Its activity is regulated as follows. Allosterically activated by HslU binding. In terms of biological role, protease subunit of a proteasome-like degradation complex believed to be a general protein degrading machinery. This is ATP-dependent protease subunit HslV from Desulfitobacterium hafniense (strain Y51).